A 181-amino-acid chain; its full sequence is Inner membrane-spanning protein YciB (181 aa).

The next 5 helical transmembrane spans lie at I22–A42, M50–D70, I80–I100, W122–L142, and F148–V168.

The protein belongs to the YciB family.

The protein resides in the cell inner membrane. In terms of biological role, plays a role in cell envelope biogenesis, maintenance of cell envelope integrity and membrane homeostasis. This Aliivibrio fischeri (strain ATCC 700601 / ES114) (Vibrio fischeri) protein is Inner membrane-spanning protein YciB.